The sequence spans 158 residues: 2-C-methyl-D-erythritol 2,4-cyclodiphosphate synthase (158 aa).

A divalent metal cation is bound by residues aspartate 9 and histidine 11. Residues 9-11 (DVH) and 35-36 (HS) each bind 4-CDP-2-C-methyl-D-erythritol 2-phosphate. An a divalent metal cation-binding site is contributed by histidine 43. 4-CDP-2-C-methyl-D-erythritol 2-phosphate contacts are provided by residues 57-59 (DIG), 62-66 (FPDTD), 101-107 (AQKPKMA), 133-136 (TTTE), phenylalanine 140, and arginine 143.

It belongs to the IspF family. In terms of assembly, homotrimer. It depends on a divalent metal cation as a cofactor.

The enzyme catalyses 4-CDP-2-C-methyl-D-erythritol 2-phosphate = 2-C-methyl-D-erythritol 2,4-cyclic diphosphate + CMP. It participates in isoprenoid biosynthesis; isopentenyl diphosphate biosynthesis via DXP pathway; isopentenyl diphosphate from 1-deoxy-D-xylulose 5-phosphate: step 4/6. Its function is as follows. Involved in the biosynthesis of isopentenyl diphosphate (IPP) and dimethylallyl diphosphate (DMAPP), two major building blocks of isoprenoid compounds. Catalyzes the conversion of 4-diphosphocytidyl-2-C-methyl-D-erythritol 2-phosphate (CDP-ME2P) to 2-C-methyl-D-erythritol 2,4-cyclodiphosphate (ME-CPP) with a corresponding release of cytidine 5-monophosphate (CMP). In Geobacillus sp. (strain WCH70), this protein is 2-C-methyl-D-erythritol 2,4-cyclodiphosphate synthase.